The following is a 140-amino-acid chain: Regulator of ribonuclease activity B (140 aa).

The tract at residues 115–140 (FEDPNAQDDDEDDGEAIDEDDNGIRH) is disordered. Over residues 119-140 (NAQDDDEDDGEAIDEDDNGIRH) the composition is skewed to acidic residues.

Belongs to the RraB family. As to quaternary structure, interacts with the C-terminal region of Rne.

The protein localises to the cytoplasm. Globally modulates RNA abundance by binding to RNase E (Rne) and regulating its endonucleolytic activity. Can modulate Rne action in a substrate-dependent manner by altering the composition of the degradosome. The polypeptide is Regulator of ribonuclease activity B (Pantoea ananatis (strain LMG 20103)).